The following is a 118-amino-acid chain: Ferredoxin-thioredoxin reductase, catalytic chain (118 aa).

Cys-56 provides a ligand contact to [4Fe-4S] cluster. The active-site Nucleophile is Cys-58. A disulfide bridge connects residues Cys-58 and Cys-88. [4Fe-4S] cluster-binding residues include Cys-75, Cys-77, and Cys-86.

The protein belongs to the ferredoxin thioredoxin reductase beta subunit family. As to quaternary structure, heterodimer of subunit A (variable subunit) and subunit B (catalytic subunit). Heterodimeric FTR forms a complex with ferredoxin and thioredoxin. [4Fe-4S] cluster is required as a cofactor.

The enzyme catalyses [thioredoxin]-disulfide + 2 reduced [2Fe-2S]-[ferredoxin] + 2 H(+) = [thioredoxin]-dithiol + 2 oxidized [2Fe-2S]-[ferredoxin]. Functionally, catalytic subunit of the ferredoxin-thioredoxin reductase (FTR), which catalyzes the two-electron reduction of thioredoxins by the electrons provided by reduced ferredoxin. The polypeptide is Ferredoxin-thioredoxin reductase, catalytic chain (Synechocystis sp. (strain ATCC 27184 / PCC 6803 / Kazusa)).